Reading from the N-terminus, the 981-residue chain is MTSMMAMGEPRLNWDVSPKNGLKTFFSRENYKDQSMAPSLKELCILSSRRIGENLNASAGSVENEPTVNSAAQAKEKVKTTVGMVLLPKPRVPYPRFSRFSQREQRNYVDLLVKYAKVPPNSKTVGINKNDYLQYLEMKKHVNEEVTEFLKFLQNSAKKCAQDYNMLSDDACLVTEQILKACIEQVKKYPEFYTLHEVTSLMGFFPFRIEMGFKLEKTLLALGSVKYVKTVFPSMPAKLQLSKDTIPAIETPEQIAAAMHYDISEDPNAEKLVARYHPQIALTSQSLFTLLNNHGPSYKEQWEIPVCIQVIPVAGSKPIKVIYINSPLPQKKMTMRERNQIFHEVPLKFMMSKNTSVPVSAVFMDKPEEYISEMDISYEVNECRKIETLENLDLEFDDDVTELETFGATTTKPSKSPSPASTSTVAPMTDTLTAPSIADTSEAPTSPDISAHSRSLSQILMEQLQKEKQLVTGMIDSGPEESKNKDDQRFIPCGEKVSNSDKPLVQDSDLKTSDPLQLESSMEIETSSKNDMATEMESVDERVNVLENTDTNSKEKTVTSEAANTEDVVLDSSDTDEDCLIIDMECQSNSHGKTAEVGSNLSSKPASLNSSSGQTSTGNQTNSTCPEESCVLKKPIKRVYKKFDPVGEILKMQDELLKPISRKIPELPLMNSENSKQPPISEQPSAPSDACSWPKSIWPSAFQKPKGRLPYELQDYVEDTSEYVAPQEGNFVYKLFSLQDLLLLVRCSVQRIETRPRSKKRKKIRRQFPVYVLPKVEYQACYGVEALTESELCRLWTESLLHSNSSFYVGHIDAFTSKLFLLEEITSEELKEKLSALKISSLFNILQHILRKLSSLQEGSYLLSHAAEDSSLLIYKTSDGKVTRTAYNLHKTHCGLPGVPSSLSVPWVPLDPSLLLPNHIHHGRIPCTFPPKSLGPTAQQKIGGTRMPTRSHRNSVSVETKSLPAQQVENEGVASSKRKIT.

Phosphoserine occurs at positions 17 and 326. Disordered stretches follow at residues 406–427 (FGATTTKPSKSPSPASTSTVAP) and 475–516 (IDSG…SDPL). Residues 408–424 (ATTTKPSKSPSPASTST) are compositionally biased toward low complexity. Residues 480–489 (EESKNKDDQR) are compositionally biased toward basic and acidic residues. Phosphoserine is present on Ser-573. Position 575 is a phosphothreonine (Thr-575). Disordered stretches follow at residues 591 to 627 (HGKTAEVGSNLSSKPASLNSSSGQTSTGNQTNSTCPE), 669 to 690 (LMNSENSKQPPISEQPSAPSDA), and 930 to 981 (PPKS…RKIT). Positions 599-624 (SNLSSKPASLNSSSGQTSTGNQTNST) are enriched in low complexity. Composition is skewed to polar residues over residues 671–686 (NSENSKQPPISEQPSA) and 954–969 (NSVSVETKSLPAQQVE).

The protein belongs to the ICE2 family. As to quaternary structure, component of the little elongation complex (LEC), at least composed of ELL (ELL, ELL2 or ELL3), ZC3H8, ICE1 and ICE2. Interacts with ICE1 (via C-terminus domain). Interacts with ELL.

The protein resides in the nucleus. Its function is as follows. Component of the little elongation complex (LEC), a complex required to regulate small nuclear RNA (snRNA) gene transcription by RNA polymerase II and III. The chain is Little elongation complex subunit 2 (ICE2) from Bos taurus (Bovine).